We begin with the raw amino-acid sequence, 330 residues long: Elongation factor Ts, mitochondrial (330 aa).

The N-terminal 16 residues, 1 to 16, are a transit peptide targeting the mitochondrion; sequence MYRNCRKAFTFSLRHY.

It belongs to the EF-Ts family.

It is found in the mitochondrion. Its function is as follows. Associates with the EF-Tu.GDP complex and induces the exchange of GDP to GTP. It remains bound to the aminoacyl-tRNA.EF-Tu.GTP complex up to the GTP hydrolysis stage on the ribosome. In Laccaria bicolor (strain S238N-H82 / ATCC MYA-4686) (Bicoloured deceiver), this protein is Elongation factor Ts, mitochondrial.